Reading from the N-terminus, the 264-residue chain is Triosephosphate isomerase (264 aa).

13–15 (NWK) is a binding site for substrate. The Electrophile role is filled by histidine 98. Glutamate 170 acts as the Proton acceptor in catalysis. Substrate-binding positions include glycine 176, serine 216, and 237–238 (GG).

This sequence belongs to the triosephosphate isomerase family. In terms of assembly, homodimer.

The protein resides in the cytoplasm. It carries out the reaction D-glyceraldehyde 3-phosphate = dihydroxyacetone phosphate. It participates in carbohydrate biosynthesis; gluconeogenesis. It functions in the pathway carbohydrate degradation; glycolysis; D-glyceraldehyde 3-phosphate from glycerone phosphate: step 1/1. Involved in the gluconeogenesis. Catalyzes stereospecifically the conversion of dihydroxyacetone phosphate (DHAP) to D-glyceraldehyde-3-phosphate (G3P). The protein is Triosephosphate isomerase of Protochlamydia amoebophila (strain UWE25).